We begin with the raw amino-acid sequence, 674 residues long: Alpha-L-arabinofuranosidase 2 (674 aa).

Positions 1-24 (MDMETSWRFLRSVCLLSFILGSFS) are cleaved as a signal peptide. Asn-48, Asn-180, Asn-199, Asn-210, Asn-361, Asn-522, and Asn-548 each carry an N-linked (GlcNAc...) asparagine glycan.

Belongs to the glycosyl hydrolase 51 family. As to expression, high expression in flowers, siliques and stems. Observed in the vasculature of older root tissue, at the tip of anthers and in the petal blade of fully developed flowers, in floral abscission zones and in silique replum tissue. Expressed in the cambium and phloem, but not in the xylem or in the vascular system of floral tissues.

It localises to the secreted. It is found in the extracellular space. The protein localises to the extracellular matrix. It carries out the reaction Hydrolysis of terminal non-reducing alpha-L-arabinofuranoside residues in alpha-L-arabinosides.. In terms of biological role, may be involved in the coordinated dissolution of the cell wall matrix during abscission and in the secondary cell wall formation in xylem vessels. The chain is Alpha-L-arabinofuranosidase 2 (ASD2) from Arabidopsis thaliana (Mouse-ear cress).